The sequence spans 56 residues: Protein hunchback (56 aa).

3 C2H2-type zinc fingers span residues 1 to 5 (HLRNH), 11 to 33 (FKCD…LKSH), and 39 to 56 (FRCS…SLKL).

Belongs to the hunchback C2H2-type zinc-finger protein family.

It is found in the nucleus. Its function is as follows. Gap class segmentation protein that controls development of head structures. This Euscelis plebejus (Leafhopper) protein is Protein hunchback (hb).